A 120-amino-acid polypeptide reads, in one-letter code: U13-lycotoxin-Ls1e (120 aa).

Positions 1 to 16 (MKILFVLISILYAVYC) are cleaved as a signal peptide. Positions 17-54 (FSSEEDVDSAYLANELEPVEDINSEQYAALEPKEEQER) are excised as a propeptide. Cystine bridges form between C56/C70, C63/C76, C69/C87, and C78/C85. An Agouti domain is found at 56–95 (CAGMGRDCKDDCDCCLNIATCNCWFGRYFCSCTFGDYQTC).

The protein belongs to the neurotoxin 05 (agouti) family. Post-translationally, contains 6 disulfide bonds. In terms of tissue distribution, expressed by the venom gland.

The protein localises to the secreted. The chain is U13-lycotoxin-Ls1e from Lycosa singoriensis (Wolf spider).